A 157-amino-acid chain; its full sequence is SsrA-binding protein (157 aa).

This sequence belongs to the SmpB family.

Its subcellular location is the cytoplasm. Required for rescue of stalled ribosomes mediated by trans-translation. Binds to transfer-messenger RNA (tmRNA), required for stable association of tmRNA with ribosomes. tmRNA and SmpB together mimic tRNA shape, replacing the anticodon stem-loop with SmpB. tmRNA is encoded by the ssrA gene; the 2 termini fold to resemble tRNA(Ala) and it encodes a 'tag peptide', a short internal open reading frame. During trans-translation Ala-aminoacylated tmRNA acts like a tRNA, entering the A-site of stalled ribosomes, displacing the stalled mRNA. The ribosome then switches to translate the ORF on the tmRNA; the nascent peptide is terminated with the 'tag peptide' encoded by the tmRNA and targeted for degradation. The ribosome is freed to recommence translation, which seems to be the essential function of trans-translation. The polypeptide is SsrA-binding protein (Methylobacterium nodulans (strain LMG 21967 / CNCM I-2342 / ORS 2060)).